The primary structure comprises 278 residues: 4-hydroxy-tetrahydrodipicolinate reductase (278 aa).

NAD(+) contacts are provided by residues 13–18 and 111–113; these read GAAGKM and GTT. The active-site Proton donor/acceptor is the histidine 167. Histidine 168 lines the (S)-2,3,4,5-tetrahydrodipicolinate pocket. Lysine 171 functions as the Proton donor in the catalytic mechanism. 177–178 is a (S)-2,3,4,5-tetrahydrodipicolinate binding site; the sequence is GT.

It belongs to the DapB family.

Its subcellular location is the cytoplasm. It carries out the reaction (S)-2,3,4,5-tetrahydrodipicolinate + NAD(+) + H2O = (2S,4S)-4-hydroxy-2,3,4,5-tetrahydrodipicolinate + NADH + H(+). It catalyses the reaction (S)-2,3,4,5-tetrahydrodipicolinate + NADP(+) + H2O = (2S,4S)-4-hydroxy-2,3,4,5-tetrahydrodipicolinate + NADPH + H(+). It participates in amino-acid biosynthesis; L-lysine biosynthesis via DAP pathway; (S)-tetrahydrodipicolinate from L-aspartate: step 4/4. Its function is as follows. Catalyzes the conversion of 4-hydroxy-tetrahydrodipicolinate (HTPA) to tetrahydrodipicolinate. The sequence is that of 4-hydroxy-tetrahydrodipicolinate reductase from Mastigocladus laminosus (Fischerella sp.).